A 586-amino-acid chain; its full sequence is Arginine--tRNA ligase (586 aa).

The 'HIGH' region motif lies at 128-138 (ANPTGPLHVGH).

The protein belongs to the class-I aminoacyl-tRNA synthetase family. In terms of assembly, monomer.

The protein resides in the cytoplasm. It carries out the reaction tRNA(Arg) + L-arginine + ATP = L-arginyl-tRNA(Arg) + AMP + diphosphate. The polypeptide is Arginine--tRNA ligase (Coxiella burnetii (strain RSA 331 / Henzerling II)).